A 309-amino-acid chain; its full sequence is Anamorsin homolog (309 aa).

Residues 4–169 (VSPGHSVLLL…SYEVGSSAQL (166 aa)) form an N-terminal SAM-like domain region. The segment at 170–218 (TLSFAKKKQVEKPKLDENTAKIWSLSAVDMNDDDIDLLDPDELLDEEDL) is linker. Residues Cys-230, Cys-242, Cys-245, and Cys-247 each contribute to the [2Fe-2S] cluster site. The segment at 230–247 (CGTGGDTKKRKACKNCTC) is fe-S binding site A. 4 residues coordinate [4Fe-4S] cluster: Cys-270, Cys-273, Cys-281, and Cys-284. 2 consecutive short sequence motifs (cx2C motif) follow at residues 270-273 (CGNC) and 281-284 (CASC). A fe-S binding site B region spans residues 270-284 (CGNCYLGDAFRCASC).

Belongs to the anamorsin family. In terms of assembly, monomer. It depends on [2Fe-2S] cluster as a cofactor. Requires [4Fe-4S] cluster as cofactor.

It is found in the cytoplasm. It localises to the mitochondrion intermembrane space. Component of the cytosolic iron-sulfur (Fe-S) protein assembly (CIA) machinery. Required for the maturation of extramitochondrial Fe-S proteins. Part of an electron transfer chain functioning in an early step of cytosolic Fe-S biogenesis, facilitating the de novo assembly of a [4Fe-4S] cluster on the cytosolic Fe-S scaffold complex. Electrons are transferred from NADPH via a FAD- and FMN-containing diflavin oxidoreductase. Together with the diflavin oxidoreductase, also required for the assembly of the diferric tyrosyl radical cofactor of ribonucleotide reductase (RNR), probably by providing electrons for reduction during radical cofactor maturation in the catalytic small subunit. The protein is Anamorsin homolog of Branchiostoma floridae (Florida lancelet).